Here is a 469-residue protein sequence, read N- to C-terminus: Glutamate--tRNA ligase (469 aa).

Positions 9 to 19 (PSPTGFLHVGG) match the 'HIGH' region motif. The short motif at 236-240 (KLSKR) is the 'KMSKS' region element. Lysine 239 contacts ATP.

The protein belongs to the class-I aminoacyl-tRNA synthetase family. Glutamate--tRNA ligase type 1 subfamily. Monomer.

It localises to the cytoplasm. The enzyme catalyses tRNA(Glu) + L-glutamate + ATP = L-glutamyl-tRNA(Glu) + AMP + diphosphate. Its function is as follows. Catalyzes the attachment of glutamate to tRNA(Glu) in a two-step reaction: glutamate is first activated by ATP to form Glu-AMP and then transferred to the acceptor end of tRNA(Glu). In Shewanella amazonensis (strain ATCC BAA-1098 / SB2B), this protein is Glutamate--tRNA ligase.